The sequence spans 154 residues: Large-conductance mechanosensitive channel (154 aa).

Transmembrane regions (helical) follow at residues 14-34 (VVDLAVGIVIGAAFGAIVNSL) and 86-106 (VFINALINFLILAMAIFFFVV).

The protein belongs to the MscL family. In terms of assembly, homopentamer.

It localises to the cell membrane. Functionally, channel that opens in response to stretch forces in the membrane lipid bilayer. May participate in the regulation of osmotic pressure changes within the cell. In Dehalococcoides mccartyi (strain CBDB1), this protein is Large-conductance mechanosensitive channel.